The following is a 559-amino-acid chain: Hepatocyte nuclear factor 1-beta (559 aa).

The tract at residues 1-31 is dimerization; the sequence is MVSKLTSLQQELLSALLSSGVTKEVLVQALE. The HNF-p1 domain maps to 1-32; that stretch reads MVSKLTSLQQELLSALLSSGVTKEVLVQALEE. Phosphoserine occurs at positions 49, 52, 75, and 80. Positions 93-188 constitute a POU-specific atypical domain; the sequence is KELQALNTEE…ILRQFNQTVQ (96 aa). Positions 231–312 form a DNA-binding region, homeobox; HNF1-type; that stretch reads MRRNRFKWGP…RRKEEEAFRQ (82 aa). The span at 328 to 341 shows a compositional bias: low complexity; that stretch reads NTLLSHSSPHHQPS. Positions 328 to 371 are disordered; that stretch reads NTLLSHSSPHHQPSTSPPNKLPGVRYNQQGNNEVTSSSTISHHG. Positions 353 to 371 are enriched in polar residues; sequence YNQQGNNEVTSSSTISHHG.

This sequence belongs to the HNF1 homeobox family. As to quaternary structure, binds DNA as a dimer. Can form homodimer or heterodimer with HNF1-alpha. Interacts (via HNF-p1 domain) with PCBD1; the interaction increases its transactivation activity.

The protein localises to the nucleus. Its function is as follows. Transcription factor that binds to the inverted palindrome 5'-GTTAATNATTAAC-3'. Binds to the FPC element in the cAMP regulatory unit of the PLAU gene. Transcriptional activity is increased by coactivator PCBD1. The sequence is that of Hepatocyte nuclear factor 1-beta (HNF1B) from Sus scrofa (Pig).